An 86-amino-acid chain; its full sequence is Small ribosomal subunit protein bS20 (86 aa).

Positions 1–11 (MANIKQQKKRN) are enriched in basic residues. A disordered region spans residues 1 to 20 (MANIKQQKKRNKTNEKRRLQ).

The protein belongs to the bacterial ribosomal protein bS20 family.

In terms of biological role, binds directly to 16S ribosomal RNA. In Aster yellows witches'-broom phytoplasma (strain AYWB), this protein is Small ribosomal subunit protein bS20.